Here is a 471-residue protein sequence, read N- to C-terminus: Isochorismate synthase MenF (471 aa).

The active-site Proton acceptor is Lys-226. The active-site Proton donor is Glu-275. Residues Glu-319 and Glu-454 each contribute to the Mg(2+) site.

It belongs to the isochorismate synthase family. Requires Mg(2+) as cofactor.

It carries out the reaction chorismate = isochorismate. It functions in the pathway quinol/quinone metabolism; 1,4-dihydroxy-2-naphthoate biosynthesis; 1,4-dihydroxy-2-naphthoate from chorismate: step 1/7. Its pathway is quinol/quinone metabolism; menaquinone biosynthesis. In terms of biological role, catalyzes the conversion of chorismate to isochorismate. This chain is Isochorismate synthase MenF, found in Bacillus subtilis (strain 168).